We begin with the raw amino-acid sequence, 58 residues long: UPF0391 membrane protein OCAR_5266/OCA5_c27040 (58 aa).

The next 2 membrane-spanning stretches (helical) occupy residues 4–24 (WVVTFLIIALVAGLLGFGGIA) and 30–50 (IAKIVFFIAIVLFAVSAVVGL).

Belongs to the UPF0391 family.

The protein resides in the cell membrane. This is UPF0391 membrane protein OCAR_5266/OCA5_c27040 from Afipia carboxidovorans (strain ATCC 49405 / DSM 1227 / KCTC 32145 / OM5) (Oligotropha carboxidovorans).